The chain runs to 892 residues: Smad protein daf-3 (892 aa).

Disordered stretches follow at residues 1–43 and 135–161; these read MGDH…GLED and PYLD…FDTK. Polar residues predominate over residues 15–26; the sequence is IPPQFNYSQPGT. The region spanning 198–347 is the MH1 domain; the sequence is KIVEYLMYYR…YEIVIGTMIV (150 aa). The disordered stretch occupies residues 505–552; it reads YPDFHHPFNQQPHQPPQLSQNHTSQQGSHQPGHQGQVPNDPPISRPVL. Low complexity predominate over residues 528–540; sequence SQQGSHQPGHQGQ. The MH2 domain maps to 657-880; the sequence is WGTIVYYEKN…TNCFEPLGME (224 aa).

It belongs to the dwarfin/SMAD family. As to quaternary structure, interacts with R-SMADs daf-8 and daf-14. Interacts with daf-14 in a daf-8 dependent manner. May interact with daf-5.

The protein resides in the cytoplasm. It is found in the nucleus. The protein localises to the chromosome. In terms of biological role, transcriptional regulator and common SMAD (co-SMAD), required to regulate entry into a developmentally arrested larval state known as dauer, in response to harsh environmental conditions. Probable component of transcriptional regulatory complex with SMAD protein daf-5. Acts antagonistically to SMAD signaling downstream of TGF-beta-like daf-7 signaling. Binds to the 5'-GTCTG-3' motif found in regulatory regions and may modulate the expression of genes involved in TGF-beta-like daf-7 and Notch lag-2 signaling. May regulate gene expression outside the dauer pathway. The protein is Smad protein daf-3 of Caenorhabditis elegans.